Consider the following 211-residue polypeptide: Uracil phosphoribosyltransferase (211 aa).

5-phospho-alpha-D-ribose 1-diphosphate contacts are provided by residues arginine 77, arginine 102, and 129–137 (DPMLATGGS). Uracil is bound by residues isoleucine 192 and 197-199 (GDA). Aspartate 198 contributes to the 5-phospho-alpha-D-ribose 1-diphosphate binding site.

Belongs to the UPRTase family. The cofactor is Mg(2+).

It carries out the reaction UMP + diphosphate = 5-phospho-alpha-D-ribose 1-diphosphate + uracil. It participates in pyrimidine metabolism; UMP biosynthesis via salvage pathway; UMP from uracil: step 1/1. Allosterically activated by GTP. In terms of biological role, catalyzes the conversion of uracil and 5-phospho-alpha-D-ribose 1-diphosphate (PRPP) to UMP and diphosphate. The sequence is that of Uracil phosphoribosyltransferase from Corynebacterium diphtheriae (strain ATCC 700971 / NCTC 13129 / Biotype gravis).